The following is a 305-amino-acid chain: Dioxygenase hkm4 (305 aa).

3 residues coordinate Fe cation: H140, D142, and H216.

The protein belongs to the PhyH family. Fe cation is required as a cofactor.

It functions in the pathway secondary metabolite biosynthesis. Its function is as follows. Dioxygenase; part of the gene cluster that mediates the biosynthesis of hancockiamides, an unusual new family of N-cinnamoylated piperazines. The NRPS hkm10 and the NmrA-like reductase hkm9 are proposed to convert two molecules of L-Phe to the intermediary piperazine called xenocockiamide A. Xenocockiamide A is then converted to hancockiamide D via a series of hydroxylations and O-methylations. The tyrosinase hkm6 may catalyze an aromatic hydroxylation, then the 2-oxoglutarate-dependent Fe(II) dioxygenase hkm4 and the FAD-dependent phenol hydroxylase hkm7 may catalyze consecutive hydroxylations to install 2 more hydroxy groups, and the methyltransferase hkm8 probably catalyzes two methylations using 2 molecules of S-adenosyl-L-methionine (SAM). The NRPS hkm11 activates and transfers trans-cinnamate supplied by the PAL hkm12 to hancockiamide D and produces hancockiamide A. NRPS Hkm11 has the flexibility to tolerate the bulky hancockiamide G as a substrate and the absence of the acetyl-transferase hkm3 opens up the opportunity for hkm11 to introduce a second N-cinnamoyl moiety. The cytochrome P450 monooxygenase hkm5 catalyzes the methylenedioxy bridge formation, converting hancockiamide A into hancockiamide G. Hkm5 can also convert hancockiamide B into hancockiamide C, and hancockiamide D into hancockiamide H. The N-acetyltransferase hkm3 finally transfers an acetyl group to 1-N of piperazine, converting hancockiamide A into hancockiamide B and hancockiamide G into hancockiamide C. This chain is Dioxygenase hkm4, found in Aspergillus hancockii.